A 256-amino-acid chain; its full sequence is Triosephosphate isomerase (256 aa).

Substrate is bound at residue 10–12 (NWK). Catalysis depends on histidine 99, which acts as the Electrophile. Catalysis depends on glutamate 171, which acts as the Proton acceptor. Substrate is bound by residues glycine 177, serine 216, and 237 to 238 (GG).

The protein belongs to the triosephosphate isomerase family. Homodimer.

It localises to the cytoplasm. It catalyses the reaction D-glyceraldehyde 3-phosphate = dihydroxyacetone phosphate. It functions in the pathway carbohydrate biosynthesis; gluconeogenesis. Its pathway is carbohydrate degradation; glycolysis; D-glyceraldehyde 3-phosphate from glycerone phosphate: step 1/1. Functionally, involved in the gluconeogenesis. Catalyzes stereospecifically the conversion of dihydroxyacetone phosphate (DHAP) to D-glyceraldehyde-3-phosphate (G3P). In Colwellia psychrerythraea (strain 34H / ATCC BAA-681) (Vibrio psychroerythus), this protein is Triosephosphate isomerase.